The sequence spans 1242 residues: ATP-dependent RNA helicase DHX8 (1242 aa).

Disordered stretches follow at residues 75–283 (RPSR…DDPE) and 354–449 (SMKE…GLLP). 3 stretches are compositionally biased toward basic and acidic residues: residues 87–97 (TVGDKKEDKKS), 113–141 (YSKK…KTDM), and 180–196 (RDRD…DRHS). Basic residues-rich tracts occupy residues 197–222 (DRRR…RRSR) and 232–252 (DRRH…RSRS). The segment covering 253–269 (RSTERRDRRDRSRDCSE) has biased composition (basic and acidic residues). In terms of domain architecture, S1 motif spans 285–356 (GKIYSGKIAN…TGQKVSLSMK (72 aa)). Polar residues predominate over residues 388 to 399 (FSSSTSMLNLQG). Residues 439–449 (PDFDEETGLLP) show a composition bias toward acidic residues. A Helicase ATP-binding domain is found at 596-759 (IKAVTDNQIL…FFKAPIFTIP (164 aa)). ATP is bound at residue 609–616 (GETGSGKT). The DEAH box motif lies at 706–709 (DEAH). A Helicase C-terminal domain is found at 777–957 (YLDASLITVM…TTVLQLKTMG (181 aa)).

The protein belongs to the DEAD box helicase family. DEAH subfamily. DDX8/PRP22 sub-subfamily. In terms of assembly, identified in the spliceosome C complex.

It localises to the nucleus. It catalyses the reaction ATP + H2O = ADP + phosphate + H(+). Its function is as follows. Involved in pre-mRNA splicing as component of the spliceosome. Facilitates nuclear export of spliced mRNA by releasing the RNA from the spliceosome. Before and after egg-chamber formation, required for nurse-cell chromatin dispersal (NCCD) probably by playing a role in spliceosome localization to chromatin/interchromatin spaces. This Drosophila melanogaster (Fruit fly) protein is ATP-dependent RNA helicase DHX8.